Reading from the N-terminus, the 314-residue chain is 4-hydroxy-3-methylbut-2-enyl diphosphate reductase (314 aa).

Cysteine 12 contacts [4Fe-4S] cluster. (2E)-4-hydroxy-3-methylbut-2-enyl diphosphate-binding residues include histidine 41 and histidine 74. 2 residues coordinate dimethylallyl diphosphate: histidine 41 and histidine 74. Isopentenyl diphosphate is bound by residues histidine 41 and histidine 74. Cysteine 96 is a binding site for [4Fe-4S] cluster. Histidine 124 contributes to the (2E)-4-hydroxy-3-methylbut-2-enyl diphosphate binding site. Histidine 124 is a binding site for dimethylallyl diphosphate. Isopentenyl diphosphate is bound at residue histidine 124. The active-site Proton donor is the glutamate 126. Residue threonine 167 participates in (2E)-4-hydroxy-3-methylbut-2-enyl diphosphate binding. Cysteine 197 provides a ligand contact to [4Fe-4S] cluster. 4 residues coordinate (2E)-4-hydroxy-3-methylbut-2-enyl diphosphate: serine 225, serine 226, asparagine 227, and serine 269. Positions 225, 226, 227, and 269 each coordinate dimethylallyl diphosphate. Isopentenyl diphosphate-binding residues include serine 225, serine 226, asparagine 227, and serine 269.

It belongs to the IspH family. The cofactor is [4Fe-4S] cluster.

The enzyme catalyses isopentenyl diphosphate + 2 oxidized [2Fe-2S]-[ferredoxin] + H2O = (2E)-4-hydroxy-3-methylbut-2-enyl diphosphate + 2 reduced [2Fe-2S]-[ferredoxin] + 2 H(+). The catalysed reaction is dimethylallyl diphosphate + 2 oxidized [2Fe-2S]-[ferredoxin] + H2O = (2E)-4-hydroxy-3-methylbut-2-enyl diphosphate + 2 reduced [2Fe-2S]-[ferredoxin] + 2 H(+). It functions in the pathway isoprenoid biosynthesis; dimethylallyl diphosphate biosynthesis; dimethylallyl diphosphate from (2E)-4-hydroxy-3-methylbutenyl diphosphate: step 1/1. Its pathway is isoprenoid biosynthesis; isopentenyl diphosphate biosynthesis via DXP pathway; isopentenyl diphosphate from 1-deoxy-D-xylulose 5-phosphate: step 6/6. Its function is as follows. Catalyzes the conversion of 1-hydroxy-2-methyl-2-(E)-butenyl 4-diphosphate (HMBPP) into a mixture of isopentenyl diphosphate (IPP) and dimethylallyl diphosphate (DMAPP). Acts in the terminal step of the DOXP/MEP pathway for isoprenoid precursor biosynthesis. The polypeptide is 4-hydroxy-3-methylbut-2-enyl diphosphate reductase (Haemophilus influenzae (strain 86-028NP)).